Reading from the N-terminus, the 1009-residue chain is Delphilin (1009 aa).

Disordered regions lie at residues 28–82 (CRSK…SNTM), 170–193 (EGPV…RSRS), 322–369 (ASPD…SRDT), 414–635 (ELSS…SDNN), and 990–1009 (SETQ…PLAW). The segment covering 44–53 (RSQDHHERPQ) has biased composition (basic and acidic residues). The region spanning 95–172 (TIRVYRGKKS…MPSLVVEEGP (78 aa)) is the PDZ domain. A compositionally biased stretch (polar residues) spans 322-332 (ASPDSVDSNPY). Composition is skewed to low complexity over residues 334–352 (SLDS…SPLP) and 427–439 (DDST…SGSD). Pro residues-rich tracts occupy residues 441–455 (IPPP…PPPL), 462–477 (SPLP…PPPA), and 484–493 (IAPPPPPPRP). The segment covering 521-535 (SSPQPSSQPILQLHQ) has biased composition (low complexity). The span at 557 to 602 (AQHTRLQHPSQSIYQSQQTTVPRTSPSLTKQKSLHSQPSQQSFEGT) shows a compositional bias: polar residues. Pro residues predominate over residues 607 to 628 (VPPPPPPPLPPPCDPPPLPKPS). Positions 629-1009 (PKASDNNHMS…SPRIASPLAW (381 aa)) constitute an FH2 domain.

It is found in the postsynaptic cell membrane. Its function is as follows. Postsynaptic scaffolding protein. This is Delphilin (grid2ip) from Danio rerio (Zebrafish).